The following is a 102-amino-acid chain: RNA-binding protein Hfq (102 aa).

Residues 9–68 (DPFLNALRRERVPVSIYLVNGIKLQGQIESFDQFVILLKNTVSQMVYKHAISTVVPSRPV) form the Sm domain. A disordered region spans residues 63 to 102 (VPSRPVSHHSNNAGGGASNNYHHGSNAQGSTAQQDSEETE). Positions 70–88 (HHSNNAGGGASNNYHHGSN) are enriched in low complexity.

This sequence belongs to the Hfq family. In terms of assembly, homohexamer.

RNA chaperone that binds small regulatory RNA (sRNAs) and mRNAs to facilitate mRNA translational regulation in response to envelope stress, environmental stress and changes in metabolite concentrations. Also binds with high specificity to tRNAs. This is RNA-binding protein Hfq from Salmonella agona (strain SL483).